Here is a 251-residue protein sequence, read N- to C-terminus: Probable transcriptional regulatory protein Cgl1663/cg1872 (251 aa).

Residues 1 to 22 are disordered; it reads MSGHSKWATTKHKKAANDAKRG.

It belongs to the TACO1 family.

The protein localises to the cytoplasm. The sequence is that of Probable transcriptional regulatory protein Cgl1663/cg1872 from Corynebacterium glutamicum (strain ATCC 13032 / DSM 20300 / JCM 1318 / BCRC 11384 / CCUG 27702 / LMG 3730 / NBRC 12168 / NCIMB 10025 / NRRL B-2784 / 534).